Consider the following 197-residue polypeptide: Probable nicotinate-nucleotide adenylyltransferase (197 aa).

Belongs to the NadD family.

It catalyses the reaction nicotinate beta-D-ribonucleotide + ATP + H(+) = deamido-NAD(+) + diphosphate. Its pathway is cofactor biosynthesis; NAD(+) biosynthesis; deamido-NAD(+) from nicotinate D-ribonucleotide: step 1/1. In terms of biological role, catalyzes the reversible adenylation of nicotinate mononucleotide (NaMN) to nicotinic acid adenine dinucleotide (NaAD). The sequence is that of Probable nicotinate-nucleotide adenylyltransferase from Neisseria meningitidis serogroup C (strain 053442).